Consider the following 457-residue polypeptide: tRNA modification GTPase MnmE (457 aa).

Residues R24, E81, and K124 each coordinate (6S)-5-formyl-5,6,7,8-tetrahydrofolate. In terms of domain architecture, TrmE-type G spans 220–379 (GIQLVLAGAP…LKQKILHVVG (160 aa)). N230 is a K(+) binding site. GTP is bound by residues 230-235 (NVGKSS), 249-255 (TPIAGTT), and 274-277 (DTAG). S234 lines the Mg(2+) pocket. 3 residues coordinate K(+): T249, I251, and T254. Mg(2+) is bound at residue T255. K457 serves as a coordination point for (6S)-5-formyl-5,6,7,8-tetrahydrofolate.

This sequence belongs to the TRAFAC class TrmE-Era-EngA-EngB-Septin-like GTPase superfamily. TrmE GTPase family. Homodimer. Heterotetramer of two MnmE and two MnmG subunits. The cofactor is K(+).

It localises to the cytoplasm. Exhibits a very high intrinsic GTPase hydrolysis rate. Involved in the addition of a carboxymethylaminomethyl (cmnm) group at the wobble position (U34) of certain tRNAs, forming tRNA-cmnm(5)s(2)U34. The protein is tRNA modification GTPase MnmE of Polynucleobacter asymbioticus (strain DSM 18221 / CIP 109841 / QLW-P1DMWA-1) (Polynucleobacter necessarius subsp. asymbioticus).